A 224-amino-acid polypeptide reads, in one-letter code: Cytochrome c oxidase subunit 2 (224 aa).

Over methionine 1 to histidine 26 the chain is Mitochondrial intermembrane. Residues alanine 27–asparagine 48 traverse the membrane as a helical segment. The Mitochondrial matrix segment spans residues threonine 49 to glutamate 62. A helical membrane pass occupies residues threonine 63–arginine 82. Over leucine 83–asparagine 224 the chain is Mitochondrial intermembrane. Cu cation contacts are provided by histidine 161, cysteine 196, glutamate 198, cysteine 200, histidine 204, and methionine 207. Mg(2+) is bound at residue glutamate 198.

Belongs to the cytochrome c oxidase subunit 2 family. As to quaternary structure, component of the cytochrome c oxidase (complex IV, CIV), a multisubunit enzyme composed of a catalytic core of 3 subunits and several supernumerary subunits. The complex exists as a monomer or a dimer and forms supercomplexes (SCs) in the inner mitochondrial membrane with ubiquinol-cytochrome c oxidoreductase (cytochrome b-c1 complex, complex III, CIII). It depends on Cu cation as a cofactor.

The protein localises to the mitochondrion inner membrane. The enzyme catalyses 4 Fe(II)-[cytochrome c] + O2 + 8 H(+)(in) = 4 Fe(III)-[cytochrome c] + 2 H2O + 4 H(+)(out). In terms of biological role, component of the cytochrome c oxidase, the last enzyme in the mitochondrial electron transport chain which drives oxidative phosphorylation. The respiratory chain contains 3 multisubunit complexes succinate dehydrogenase (complex II, CII), ubiquinol-cytochrome c oxidoreductase (cytochrome b-c1 complex, complex III, CIII) and cytochrome c oxidase (complex IV, CIV), that cooperate to transfer electrons derived from NADH and succinate to molecular oxygen, creating an electrochemical gradient over the inner membrane that drives transmembrane transport and the ATP synthase. Cytochrome c oxidase is the component of the respiratory chain that catalyzes the reduction of oxygen to water. Electrons originating from reduced cytochrome c in the intermembrane space (IMS) are transferred via the dinuclear copper A center (CU(A)) of subunit 2 and heme A of subunit 1 to the active site in subunit 1, a binuclear center (BNC) formed by heme A3 and copper B (CU(B)). The BNC reduces molecular oxygen to 2 water molecules using 4 electrons from cytochrome c in the IMS and 4 protons from the mitochondrial matrix. This chain is Cytochrome c oxidase subunit 2 (COII), found in Albinaria turrita (Door snail).